Consider the following 257-residue polypeptide: Imidazole glycerol phosphate synthase subunit HisF (257 aa).

Active-site residues include D11 and D130.

This sequence belongs to the HisA/HisF family. Heterodimer of HisH and HisF.

The protein resides in the cytoplasm. The catalysed reaction is 5-[(5-phospho-1-deoxy-D-ribulos-1-ylimino)methylamino]-1-(5-phospho-beta-D-ribosyl)imidazole-4-carboxamide + L-glutamine = D-erythro-1-(imidazol-4-yl)glycerol 3-phosphate + 5-amino-1-(5-phospho-beta-D-ribosyl)imidazole-4-carboxamide + L-glutamate + H(+). Its pathway is amino-acid biosynthesis; L-histidine biosynthesis; L-histidine from 5-phospho-alpha-D-ribose 1-diphosphate: step 5/9. Functionally, IGPS catalyzes the conversion of PRFAR and glutamine to IGP, AICAR and glutamate. The HisF subunit catalyzes the cyclization activity that produces IGP and AICAR from PRFAR using the ammonia provided by the HisH subunit. The polypeptide is Imidazole glycerol phosphate synthase subunit HisF (Xylella fastidiosa (strain M23)).